The sequence spans 147 residues: Ribonuclease H (147 aa).

An RNase H type-1 domain is found at 1-142 (MKKVSIYTDG…CDKLATDEIK (142 aa)). Aspartate 9, glutamate 47, aspartate 69, and aspartate 134 together coordinate Mg(2+).

The protein belongs to the RNase H family. Monomer. Mg(2+) is required as a cofactor.

The protein localises to the cytoplasm. It catalyses the reaction Endonucleolytic cleavage to 5'-phosphomonoester.. Its function is as follows. Endonuclease that specifically degrades the RNA of RNA-DNA hybrids. This chain is Ribonuclease H, found in Acetivibrio thermocellus (strain ATCC 27405 / DSM 1237 / JCM 9322 / NBRC 103400 / NCIMB 10682 / NRRL B-4536 / VPI 7372) (Clostridium thermocellum).